A 354-amino-acid chain; its full sequence is Selenide, water dikinase (354 aa).

Cys23 is an active-site residue. ATP contacts are provided by residues Lys26 and 54-56; that span reads TSD. Asp57 contributes to the Mg(2+) binding site. ATP is bound by residues Asp74, Asp97, and 145-147; that span reads GHS. Asp97 contributes to the Mg(2+) binding site. Asp233 contacts Mg(2+).

This sequence belongs to the selenophosphate synthase 1 family. Class I subfamily. As to quaternary structure, homodimer. It depends on Mg(2+) as a cofactor.

The catalysed reaction is hydrogenselenide + ATP + H2O = selenophosphate + AMP + phosphate + 2 H(+). Synthesizes selenophosphate from selenide and ATP. The polypeptide is Selenide, water dikinase (Burkholderia ambifaria (strain MC40-6)).